We begin with the raw amino-acid sequence, 442 residues long: Exodeoxyribonuclease 7 large subunit (442 aa).

It belongs to the XseA family. In terms of assembly, heterooligomer composed of large and small subunits.

The protein resides in the cytoplasm. The catalysed reaction is Exonucleolytic cleavage in either 5'- to 3'- or 3'- to 5'-direction to yield nucleoside 5'-phosphates.. Its function is as follows. Bidirectionally degrades single-stranded DNA into large acid-insoluble oligonucleotides, which are then degraded further into small acid-soluble oligonucleotides. The protein is Exodeoxyribonuclease 7 large subunit of Shewanella woodyi (strain ATCC 51908 / MS32).